A 250-amino-acid polypeptide reads, in one-letter code: Proteasome subunit alpha (250 aa).

It belongs to the peptidase T1A family. In terms of assembly, the 20S proteasome core is composed of 14 alpha and 14 beta subunits that assemble into four stacked heptameric rings, resulting in a barrel-shaped structure. The two inner rings, each composed of seven catalytic beta subunits, are sandwiched by two outer rings, each composed of seven alpha subunits. The catalytic chamber with the active sites is on the inside of the barrel. Has a gated structure, the ends of the cylinder being occluded by the N-termini of the alpha-subunits. Is capped at one or both ends by the proteasome regulatory ATPase, PAN.

It localises to the cytoplasm. Its activity is regulated as follows. The formation of the proteasomal ATPase PAN-20S proteasome complex, via the docking of the C-termini of PAN into the intersubunit pockets in the alpha-rings, triggers opening of the gate for substrate entry. Interconversion between the open-gate and close-gate conformations leads to a dynamic regulation of the 20S proteasome proteolysis activity. Functionally, component of the proteasome core, a large protease complex with broad specificity involved in protein degradation. The chain is Proteasome subunit alpha from Haloquadratum walsbyi (strain DSM 16790 / HBSQ001).